The sequence spans 320 residues: Methionyl-tRNA formyltransferase (320 aa).

112-115 (SILP) contacts (6S)-5,6,7,8-tetrahydrofolate.

Belongs to the Fmt family.

The enzyme catalyses L-methionyl-tRNA(fMet) + (6R)-10-formyltetrahydrofolate = N-formyl-L-methionyl-tRNA(fMet) + (6S)-5,6,7,8-tetrahydrofolate + H(+). Attaches a formyl group to the free amino group of methionyl-tRNA(fMet). The formyl group appears to play a dual role in the initiator identity of N-formylmethionyl-tRNA by promoting its recognition by IF2 and preventing the misappropriation of this tRNA by the elongation apparatus. This Shewanella woodyi (strain ATCC 51908 / MS32) protein is Methionyl-tRNA formyltransferase.